We begin with the raw amino-acid sequence, 256 residues long: Ethylene-responsive transcription factor ERF084 (256 aa).

Residues 115–172 (GFMGVRKRPWGRWSAEIRDRIGRCRHWLGTFDTAEEAARAYDAAARRLRGTKAKTNFV) constitute a DNA-binding region (AP2/ERF).

Belongs to the AP2/ERF transcription factor family. ERF subfamily.

The protein localises to the nucleus. Its function is as follows. Probably acts as a transcriptional activator. Binds to the GCC-box pathogenesis-related promoter element. May be involved in the regulation of gene expression by stress factors and by components of stress signal transduction pathways. In Arabidopsis thaliana (Mouse-ear cress), this protein is Ethylene-responsive transcription factor ERF084 (ERF084).